Consider the following 334-residue polypeptide: Heat-inducible transcription repressor HrcA (334 aa).

This sequence belongs to the HrcA family.

Its function is as follows. Negative regulator of class I heat shock genes (grpE-dnaK-dnaJ and groELS operons). Prevents heat-shock induction of these operons. This Albidiferax ferrireducens (strain ATCC BAA-621 / DSM 15236 / T118) (Rhodoferax ferrireducens) protein is Heat-inducible transcription repressor HrcA.